Reading from the N-terminus, the 2531-residue chain is Highly reducing polyketide synthase ausV (2531 aa).

A Ketosynthase family 3 (KS3) domain is found at serine 7–threonine 432. Active-site for beta-ketoacyl synthase activity residues include cysteine 180, histidine 315, and histidine 355. The tract at residues phenylalanine 554–serine 882 is malonyl-CoA:ACP transacylase (MAT) domain. Catalysis depends on serine 644, which acts as the For malonyltransferase activity. The tract at residues histidine 939 to aspartate 1069 is N-terminal hotdog fold. Residues histidine 939–aspartate 1238 form the PKS/mFAS DH domain. Positions aspartate 940–serine 1236 are dehydratase (DH) domain. Histidine 971 acts as the Proton acceptor; for dehydratase activity in catalysis. A C-terminal hotdog fold region spans residues tyrosine 1087–aspartate 1238. The Proton donor; for dehydratase activity role is filled by aspartate 1152. The methyltransferase (CMet) domain stretch occupies residues serine 1414–serine 1592. The segment at leucine 1832–arginine 2133 is enoyl reductase (ER) domain. A ketoreductase (KR) domain region spans residues histidine 2156–isoleucine 2331. Residues alanine 2444–serine 2521 enclose the Carrier domain. Serine 2481 bears the O-(pantetheine 4'-phosphoryl)serine mark.

It participates in secondary metabolite biosynthesis; terpenoid biosynthesis. Highly reducing polyketide synthase; part of the gene cluster that mediates the biosynthesis of calidodehydroaustin, a fungal meroterpenoid. The first step of the pathway is the synthesis of 3,5-dimethylorsellinic acid by the polyketide synthase ausA. 3,5-dimethylorsellinic acid is then prenylated by the polyprenyl transferase ausN. Further epoxidation by the FAD-dependent monooxygenase ausM and cyclization by the probable terpene cyclase ausL lead to the formation of protoaustinoid A. Protoaustinoid A is then oxidized to spiro-lactone preaustinoid A3 by the combined action of the FAD-binding monooxygenases ausB and ausC, and the dioxygenase ausE. Acid-catalyzed keto-rearrangement and ring contraction of the tetraketide portion of preaustinoid A3 by ausJ lead to the formation of preaustinoid A4. The aldo-keto reductase ausK, with the help of ausH, is involved in the next step by transforming preaustinoid A4 into isoaustinone which is in turn hydroxylated by the P450 monooxygenase ausI to form austinolide. The cytochrome P450 monooxygenase ausG modifies austinolide to austinol. Austinol is further acetylated to austin by the O-acetyltransferase ausP, which spontaneously changes to dehydroaustin. The cytochrome P450 monooxygenase ausR then converts dehydroaustin is into 7-dehydrodehydroaustin. The hydroxylation catalyzed by ausR permits the O-acetyltransferase ausQ to add an additional acetyl group to the molecule, leading to the formation of acetoxydehydroaustin. The short chain dehydrogenase ausT catalyzes the reduction of the double bond present between carbon atoms 1 and 2 to convert 7-dehydrodehydroaustin into 1,2-dihydro-7-hydroxydehydroaustin. AusQ catalyzes not only an acetylation reaction but also the addition of the PKS ausV diketide product to 1,2-dihydro-7-hydroxydehydroaustin, forming precalidodehydroaustin. Finally, the iron/alpha-ketoglutarate-dependent dioxygenase converts precalidodehydroaustin into calidodehydroaustin. The chain is Highly reducing polyketide synthase ausV from Aspergillus calidoustus.